Consider the following 173-residue polypeptide: Large ribosomal subunit protein uL10 (173 aa).

The protein belongs to the universal ribosomal protein uL10 family. Part of the ribosomal stalk of the 50S ribosomal subunit. The N-terminus interacts with L11 and the large rRNA to form the base of the stalk. The C-terminus forms an elongated spine to which L12 dimers bind in a sequential fashion forming a multimeric L10(L12)X complex.

Its function is as follows. Forms part of the ribosomal stalk, playing a central role in the interaction of the ribosome with GTP-bound translation factors. This Cupriavidus metallidurans (strain ATCC 43123 / DSM 2839 / NBRC 102507 / CH34) (Ralstonia metallidurans) protein is Large ribosomal subunit protein uL10.